The primary structure comprises 348 residues: Bombesin receptor-activated protein C6orf89 homolog (348 aa).

Over 1 to 58 the chain is Cytoplasmic; it reads MDLAANEISIYDKLSETVDLVRQTGHQCGMSEKAIEKFIRQLLEKNEPQRGPPQYPLL. Residues 59 to 79 traverse the membrane as a helical segment; it reads IAVYKVLLTLGLILFTAYFVI. The Extracellular portion of the chain corresponds to 80–348; the sequence is QPFSSLAPEP…ICDGTTLSDL (269 aa).

As to quaternary structure, homodimer. Interacts with BRS3. Interacts (via N-terminus) with SIN3B. In terms of processing, glycosylated.

Its subcellular location is the golgi apparatus membrane. The protein resides in the cytoplasm. Functionally, exhibits histone deacetylase (HDAC) enhancer properties. May play a role in cell cycle progression and wound repair of bronchial epithelial cells. This chain is Bombesin receptor-activated protein C6orf89 homolog, found in Mus musculus (Mouse).